The sequence spans 228 residues: ATP synthase F(0) complex subunit a (228 aa).

Helical transmembrane passes span 13–33 (NILA…IFPM), 69–89 (WALI…LGLL), 98–118 (QLSM…LIGL), 139–159 (IPTL…ALGV), and 194–214 (ILLF…ALVF).

The protein belongs to the ATPase A chain family. Component of the ATP synthase complex composed at least of ATP5F1A/subunit alpha, ATP5F1B/subunit beta, ATP5MC1/subunit c (homooctomer), MT-ATP6/subunit a, MT-ATP8/subunit 8, ATP5ME/subunit e, ATP5MF/subunit f, ATP5MG/subunit g, ATP5MK/subunit k, ATP5MJ/subunit j, ATP5F1C/subunit gamma, ATP5F1D/subunit delta, ATP5F1E/subunit epsilon, ATP5PF/subunit F6, ATP5PB/subunit b, ATP5PD/subunit d, ATP5PO/subunit OSCP. ATP synthase complex consists of a soluble F(1) head domain (subunits alpha(3) and beta(3)) - the catalytic core - and a membrane F(0) domain - the membrane proton channel (subunits c, a, 8, e, f, g, k and j). These two domains are linked by a central stalk (subunits gamma, delta, and epsilon) rotating inside the F1 region and a stationary peripheral stalk (subunits F6, b, d, and OSCP). Interacts with DNAJC30; interaction is direct.

It is found in the mitochondrion inner membrane. The enzyme catalyses H(+)(in) = H(+)(out). In terms of biological role, subunit a, of the mitochondrial membrane ATP synthase complex (F(1)F(0) ATP synthase or Complex V) that produces ATP from ADP in the presence of a proton gradient across the membrane which is generated by electron transport complexes of the respiratory chain. ATP synthase complex consist of a soluble F(1) head domain - the catalytic core - and a membrane F(1) domain - the membrane proton channel. These two domains are linked by a central stalk rotating inside the F(1) region and a stationary peripheral stalk. During catalysis, ATP synthesis in the catalytic domain of F(1) is coupled via a rotary mechanism of the central stalk subunits to proton translocation. With the subunit c (ATP5MC1), forms the proton-conducting channel in the F(0) domain, that contains two crucial half-channels (inlet and outlet) that facilitate proton movement from the mitochondrial intermembrane space (IMS) into the matrix. Protons are taken up via the inlet half-channel and released through the outlet half-channel, following a Grotthuss mechanism. The chain is ATP synthase F(0) complex subunit a from Pelomedusa subrufa (African side-necked turtle).